The chain runs to 95 residues: MSQTLRVIVTVQGRVQGVGYRAACADMARALGLRGWVRNRRDGAVEAFLAGPEPNVLRMQAWMEEGPDLALVTQLRTTPGDIEPLPPGFEVRPTV.

Residues 6 to 93 enclose the Acylphosphatase-like domain; the sequence is RVIVTVQGRV…PLPPGFEVRP (88 aa). Catalysis depends on residues Arg-21 and Asn-39.

Belongs to the acylphosphatase family.

It catalyses the reaction an acyl phosphate + H2O = a carboxylate + phosphate + H(+). This Ralstonia nicotianae (strain ATCC BAA-1114 / GMI1000) (Ralstonia solanacearum) protein is Acylphosphatase 2 (acyP2).